The sequence spans 141 residues: Large ribosomal subunit protein uL11 (141 aa).

It belongs to the universal ribosomal protein uL11 family. As to quaternary structure, part of the ribosomal stalk of the 50S ribosomal subunit. Interacts with L10 and the large rRNA to form the base of the stalk. L10 forms an elongated spine to which L12 dimers bind in a sequential fashion forming a multimeric L10(L12)X complex. One or more lysine residues are methylated.

In terms of biological role, forms part of the ribosomal stalk which helps the ribosome interact with GTP-bound translation factors. This is Large ribosomal subunit protein uL11 from Streptococcus pneumoniae (strain Hungary19A-6).